The sequence spans 71 residues: Conotoxin Pl071 (71 aa).

Positions 1 to 20 (MSRLFMILLVICVITLGTDA) are cleaved as a signal peptide. The propeptide occupies 21-31 (SQAEDSGTEKR). A Tyrosine amide modification is found at tyrosine 69.

It belongs to the conotoxin NSf-1 superfamily. In terms of tissue distribution, expressed by the venom duct.

It is found in the secreted. Functionally, probable neurotoxin with unknown target. Possibly targets ion channels. The protein is Conotoxin Pl071 of Conus planorbis (Planorbis cone).